The primary structure comprises 331 residues: Spondin-2 (331 aa).

Positions 1–26 (MENPSPAAALGKALCALLLATLGAAG) are cleaved as a signal peptide. The Spondin domain maps to 31 to 221 (GESICSARAL…EITSSSPSHP (191 aa)). Cysteine 35 and cysteine 171 form a disulfide bridge. Glutamate 141 is an a divalent metal cation binding site. Ca(2+) contacts are provided by aspartate 160, aspartate 188, and aspartate 192. The 55-residue stretch at 277 to 331 (DCEVSLWSSWGLCGGHCGRLGTKSRTRYVRVQPANNGSPCPELEEEAECVPDNCV) folds into the TSP type-1 domain. A C-linked (Man) tryptophan glycan is attached at tryptophan 283.

Monomer. Interacts with integrin. In terms of tissue distribution, expressed in normal lung tissue but not in lung carcinoma cell lines.

Its subcellular location is the secreted. It localises to the extracellular space. The protein resides in the extracellular matrix. Its function is as follows. Cell adhesion protein that promotes adhesion and outgrowth of hippocampal embryonic neurons. Binds directly to bacteria and their components and functions as an opsonin for macrophage phagocytosis of bacteria. Essential in the initiation of the innate immune response and represents a unique pattern-recognition molecule in the ECM for microbial pathogens. Binds bacterial lipopolysaccharide (LPS). This Homo sapiens (Human) protein is Spondin-2 (SPON2).